The primary structure comprises 699 residues: Cell pattern formation-associated protein StuA (699 aa).

2 disordered regions span residues 1–20 (MDGTPSSGPPRVEAPHLLAP) and 31–97 (TPQF…QPEH). Residues 32–49 (PQFKSQQSQPQSQSQYPS) show a composition bias toward low complexity. Polar residues predominate over residues 52–61 (NPDSYSSSSP). Residues 75-84 (EDGEDYDQEE) show a composition bias toward acidic residues. The 107-residue stretch at 226–332 (RVTATLWEDE…HNIGALLYHP (107 aa)) folds into the HTH APSES-type domain. Positions 260-281 (GTKLLNVAGMTRGRRDGILKSE) form a DNA-binding region, H-T-H motif. Disordered regions lie at residues 372-594 (AMPT…MNSM), 599-618 (RRDDEAETPRPGPNMNDLNN), and 674-699 (PSYPAGPGYELARPVTNVPRRQQSFG). Over residues 376–423 (GYTSQQPLTNGHQSMANTPQPLTNGSQPPMNGSQTPMNGPQPPMQNGG) the composition is skewed to polar residues. 2 stretches are compositionally biased toward basic and acidic residues: residues 428-438 (RVREDDDDLHR) and 478-491 (GLKRGREEHDDMHR). The segment covering 520–529 (NLHQPLSNGD) has biased composition (polar residues). Residues 535 to 545 (RGRDDDDDVHR) show a composition bias toward basic and acidic residues. Residues 566–594 (TSTSNDMLPQSPYYTLSNGAYQGPMMNSM) show a composition bias toward polar residues. The tract at residues 669–695 (TVAVSPSYPAGPGYELARPVTNVPRRQ) is nuclear localization domain.

Belongs to the EFG1/PHD1/stuA family.

The protein resides in the nucleus. Its function is as follows. Transcription factor that regulates asexual reproduction. Binds the StuA-response elements (StRE) with the consensus sequence 5'-(A/T)CGCG(T/A)N(A/C)-3' at the promoters of target genes. Controls the expression of the gene clusters involved in the production of deoxynivalenol (DON) and 15-acetyldeoxynivalenol (15ADON). Regulates the expression of genes involved in chitin and glucan metabolism. Also controls catalase activity and cell surface hydrophobicity. Plays an important role in pathogenicity. In Gibberella zeae (strain ATCC MYA-4620 / CBS 123657 / FGSC 9075 / NRRL 31084 / PH-1) (Wheat head blight fungus), this protein is Cell pattern formation-associated protein StuA.